A 481-amino-acid polypeptide reads, in one-letter code: 5-hydroxytryptamine receptor 2B (481 aa).

Residues 1–56 (MALSYRVSELQSTIPEHILQSTFVHVISSNWSGLQTESIPEEMKQIVEEQGNKLHW) are Extracellular-facing. The N-linked (GlcNAc...) asparagine glycan is linked to N30. Residues 57–79 (AALLILMVIIPTIGGNTLVILAV) form a helical membrane-spanning segment. Residues 80–90 (SLEKKLQYATN) are Cytoplasmic-facing. The helical transmembrane segment at 91 to 113 (YFLMSLAVADLLVGLFVMPIALL) threads the bilayer. Over 114–129 (TIMFEAMWPLPLVLCP) the chain is Extracellular. C128 and C207 are joined by a disulfide. A helical membrane pass occupies residues 130–151 (AWLFLDVLFSTASIMHLCAISV). Residues D135 and T140 each coordinate ergotamine. Residues 152-154 (DRY) carry the DRY motif; important for ligand-induced conformation changes motif. The Cytoplasmic portion of the chain corresponds to 152 to 171 (DRYIAIKKPIQANQYNSRAT). The helical transmembrane segment at 172 to 192 (AFIKITVVWLISIGIAIPVPI) threads the bilayer. Topologically, residues 193 to 216 (KGIETDVDNPNNITCVLTKERFGD) are extracellular. Residue L209 coordinates ergotamine. The [DE]RFG motif; may stabilize a conformation that preferentially activates signaling via beta-arrestin family members motif lies at 212-215 (ERFG). A helical membrane pass occupies residues 217 to 239 (FMLFGSLAAFFTPLAIMIVTYFL). The Cytoplasmic segment spans residues 240-324 (TIHALQKKAY…TISNEQRASK (85 aa)). Residues 325-345 (VLGIVFFLFLLMWCPFFITNI) traverse the membrane as a helical segment. The Extracellular portion of the chain corresponds to 346–360 (TLVLCDSCNQTTLQM). A disulfide bridge connects residues C350 and C353. A helical membrane pass occupies residues 361–382 (LLEIFVWIGYVSSGVNPLVYTL). The NPxxY motif; important for ligand-induced conformation changes and signaling motif lies at 376–380 (NPLVY). Residues 383-481 (FNKTFRDAFG…DKTEEQVSYV (99 aa)) are Cytoplasmic-facing. A lipid anchor (S-palmitoyl cysteine) is attached at C397. The PDZ-binding motif lies at 479 to 481 (SYV).

This sequence belongs to the G-protein coupled receptor 1 family. As to quaternary structure, interacts (via C-terminus) with MPDZ. Ubiquitous. Detected in liver, kidney, heart, pulmonary artery, and intestine. Detected at lower levels in blood, placenta and brain, especially in cerebellum, occipital cortex and frontal cortex.

The protein resides in the cell membrane. It localises to the synapse. Its subcellular location is the synaptosome. Functionally, G-protein coupled receptor for 5-hydroxytryptamine (serotonin). Also functions as a receptor for various ergot alkaloid derivatives and psychoactive substances. Ligand binding causes a conformation change that triggers signaling via guanine nucleotide-binding proteins (G proteins) and modulates the activity of downstream effectors. HTR2B is coupled to G(q)/G(11) G alpha proteins and activates phospholipase C-beta, releasing diacylglycerol (DAG) and inositol 1,4,5-trisphosphate (IP3) second messengers that modulate the activity of phosphatidylinositol 3-kinase and promote the release of Ca(2+) ions from intracellular stores, respectively. Beta-arrestin family members inhibit signaling via G proteins and mediate activation of alternative signaling pathways. Plays a role in the regulation of dopamine and 5-hydroxytryptamine release, 5-hydroxytryptamine uptake and in the regulation of extracellular dopamine and 5-hydroxytryptamine levels, and thereby affects neural activity. May play a role in the perception of pain. Plays a role in the regulation of behavior, including impulsive behavior. Required for normal proliferation of embryonic cardiac myocytes and normal heart development. Protects cardiomyocytes against apoptosis. Plays a role in the adaptation of pulmonary arteries to chronic hypoxia. Plays a role in vasoconstriction. Required for normal osteoblast function and proliferation, and for maintaining normal bone density. Required for normal proliferation of the interstitial cells of Cajal in the intestine. The sequence is that of 5-hydroxytryptamine receptor 2B from Homo sapiens (Human).